The chain runs to 103 residues: Large ribosomal subunit protein bL21 (103 aa).

Belongs to the bacterial ribosomal protein bL21 family. Part of the 50S ribosomal subunit. Contacts protein L20.

This protein binds to 23S rRNA in the presence of protein L20. The protein is Large ribosomal subunit protein bL21 of Ralstonia nicotianae (strain ATCC BAA-1114 / GMI1000) (Ralstonia solanacearum).